We begin with the raw amino-acid sequence, 413 residues long: Low-salt glycan biosynthesis hexosyltransferase Agl6 (413 aa).

The tract at residues 1–27 is disordered; the sequence is MSTRSQSESPVDAPQQGATNGQSASDI. Positions 16–25 are enriched in polar residues; the sequence is QGATNGQSAS. A run of 4 helical transmembrane segments spans residues 270–290, 304–324, 355–375, and 389–409; these read LFSA…VLAW, TGIG…FGAF, IGSV…FTWV, and VVAT…FLLG.

The protein belongs to the glycosyltransferase 2 family.

It is found in the membrane. The protein operates within protein modification; protein glycosylation. Its pathway is cell surface structure biogenesis; S-layer biogenesis. Hexosyltransferase involved in N-glycan biosynthetic pathway that takes place under low-salt conditions (1.75 M instead of 3.4 M). Participates in the formation of the tetrasaccharide present at 'Asn-532' of S-layer glycoprotein Csg, consisting of a sulfated hexose, 2 hexoses and rhamnose. Together with Agl5, mediates the addition of sugars 1 and 2 to dolichol phosphate in the tetrasaccharide. The polypeptide is Low-salt glycan biosynthesis hexosyltransferase Agl6 (agl6) (Haloferax volcanii (strain ATCC 29605 / DSM 3757 / JCM 8879 / NBRC 14742 / NCIMB 2012 / VKM B-1768 / DS2) (Halobacterium volcanii)).